Reading from the N-terminus, the 146-residue chain is Hemoglobin subunit beta (146 aa).

One can recognise a Globin domain in the interval 2-146 (HWSAEEKQLI…VAHALARKYH (145 aa)). 2 residues coordinate heme b: His-63 and His-92.

The protein belongs to the globin family. Heterotetramer of two alpha chains and two beta chains. As to expression, red blood cells.

In terms of biological role, involved in oxygen transport from the lung to the various peripheral tissues. The chain is Hemoglobin subunit beta (HBB) from Anser indicus (Bar-headed goose).